Consider the following 163-residue polypeptide: Crossover junction endodeoxyribonuclease RuvC (163 aa).

Active-site residues include D9, E76, and D148. Mg(2+)-binding residues include D9, E76, and D148.

Belongs to the RuvC family. As to quaternary structure, homodimer which binds Holliday junction (HJ) DNA. The HJ becomes 2-fold symmetrical on binding to RuvC with unstacked arms; it has a different conformation from HJ DNA in complex with RuvA. In the full resolvosome a probable DNA-RuvA(4)-RuvB(12)-RuvC(2) complex forms which resolves the HJ. Mg(2+) serves as cofactor.

The protein resides in the cytoplasm. The enzyme catalyses Endonucleolytic cleavage at a junction such as a reciprocal single-stranded crossover between two homologous DNA duplexes (Holliday junction).. The RuvA-RuvB-RuvC complex processes Holliday junction (HJ) DNA during genetic recombination and DNA repair. Endonuclease that resolves HJ intermediates. Cleaves cruciform DNA by making single-stranded nicks across the HJ at symmetrical positions within the homologous arms, yielding a 5'-phosphate and a 3'-hydroxyl group; requires a central core of homology in the junction. The consensus cleavage sequence is 5'-(A/T)TT(C/G)-3'. Cleavage occurs on the 3'-side of the TT dinucleotide at the point of strand exchange. HJ branch migration catalyzed by RuvA-RuvB allows RuvC to scan DNA until it finds its consensus sequence, where it cleaves and resolves the cruciform DNA. This is Crossover junction endodeoxyribonuclease RuvC from Trichormus variabilis (strain ATCC 29413 / PCC 7937) (Anabaena variabilis).